We begin with the raw amino-acid sequence, 118 residues long: MICOS complex subunit MIC13 (118 aa).

Over 1–7 the chain is Mitochondrial matrix; the sequence is MVARVWS. Residues 8–26 traverse the membrane as a helical segment; the sequence is LMRFLIKGSVAGGAVYLVY. At 27-118 the chain is on the mitochondrial intermembrane side; sequence DQELLGPSDK…GWEYVKARTK (92 aa).

Belongs to the MICOS complex subunit Mic13 family. As to quaternary structure, component of the mitochondrial contact site and cristae organizing system (MICOS) complex, composed of at least MICOS10/MIC10, CHCHD3/MIC19, CHCHD6/MIC25, APOO/MIC26, MICOS13/MIC13, APOOL/MIC27 and IMMT/MIC60. The complex associates with mitochondrial outer membrane proteins SAMM50, MTX1 and MTX2, and with HSPA9.

It is found in the mitochondrion inner membrane. In terms of biological role, component of the MICOS complex, a large protein complex of the mitochondrial inner membrane that plays crucial roles in the maintenance of crista junctions, inner membrane architecture, and formation of contact sites to the outer membrane. Constituent of mature MICOS complex, it is required for the formation of cristae junction (CJ) and maintenance of cristae morphology. Required for the incorporation of MICOS10/MIC10 into the MICOS complex. This chain is MICOS complex subunit MIC13, found in Macaca fascicularis (Crab-eating macaque).